Reading from the N-terminus, the 312-residue chain is Glyoxylate/hydroxypyruvate reductase A (312 aa).

The active site involves arginine 227. Histidine 275 functions as the Proton donor in the catalytic mechanism.

Belongs to the D-isomer specific 2-hydroxyacid dehydrogenase family. GhrA subfamily.

Its subcellular location is the cytoplasm. The catalysed reaction is glycolate + NADP(+) = glyoxylate + NADPH + H(+). It catalyses the reaction (R)-glycerate + NAD(+) = 3-hydroxypyruvate + NADH + H(+). The enzyme catalyses (R)-glycerate + NADP(+) = 3-hydroxypyruvate + NADPH + H(+). Functionally, catalyzes the NADPH-dependent reduction of glyoxylate and hydroxypyruvate into glycolate and glycerate, respectively. The protein is Glyoxylate/hydroxypyruvate reductase A of Escherichia coli O157:H7.